Reading from the N-terminus, the 409-residue chain is Pyruvate dehydrogenase E1 component subunit alpha, mitochondrial (409 aa).

A Phosphothreonine modification is found at Thr-6. Positions 109, 135, 136, 174, 182, 184, 213, 214, 215, 242, and 244 each coordinate pyruvate. 2 residues coordinate thiamine diphosphate: Tyr-135 and Arg-136. The thiamine diphosphate site is built by Gly-182, Val-184, Asp-213, Gly-214, Ala-215, and Asn-242. Position 213 (Asp-213) interacts with Mg(2+). Residues Asn-242 and Tyr-244 each coordinate Mg(2+). Position 306 is a phosphotyrosine (Tyr-306). His-309 contacts thiamine diphosphate. Residues Ser-310 and Ser-312 each carry the phosphoserine modification.

In terms of assembly, tetramer of 2 alpha and 2 beta subunits. It depends on thiamine diphosphate as a cofactor. Mg(2+) is required as a cofactor.

The protein resides in the mitochondrion matrix. The enzyme catalyses N(6)-[(R)-lipoyl]-L-lysyl-[protein] + pyruvate + H(+) = N(6)-[(R)-S(8)-acetyldihydrolipoyl]-L-lysyl-[protein] + CO2. With respect to regulation, E1 activity is regulated by phosphorylation (inactivation) and dephosphorylation (activation) of the alpha subunit. In terms of biological role, the pyruvate dehydrogenase complex catalyzes the overall conversion of pyruvate to acetyl-CoA and CO(2). It contains multiple copies of three enzymatic components: pyruvate dehydrogenase (E1), dihydrolipoamide acetyltransferase (E2) and lipoamide dehydrogenase (E3). This is Pyruvate dehydrogenase E1 component subunit alpha, mitochondrial (pda1) from Schizosaccharomyces pombe (strain 972 / ATCC 24843) (Fission yeast).